Here is a 1855-residue protein sequence, read N- to C-terminus: Unconventional myosin-Va (1855 aa).

N-acetylalanine is present on Ala2. Positions 8 to 60 (TKFARVWIPDPEEVWKSAELLKDYKPGDKVLLLHLEEGKDLEYHLDPKTKELP) constitute a Myosin N-terminal SH3-like domain. A Myosin motor domain is found at 69 to 763 (VGENDLTALS…QVAYLEKLRA (695 aa)). 163–170 (GESGAGKT) is an ATP binding site. Positions 598–631 (AISPTSATSSGRTPLTRTPAKPTKGRPGQMAKEH) are disordered. Ser600 carries the phosphoserine modification. Polar residues predominate over residues 600 to 613 (SPTSATSSGRTPLT). Residues 643–665 (LHLLMETLNATTPHYVRCIKPND) form an actin-binding region. 6 IQ domains span residues 766–788 (LRAA…KYLR), 789–818 (MRKA…TKAA), 814–836 (RTKA…RYKI), 837–861 (RRAA…RKIL), 862–883 (REHK…THYK), and 885–914 (SMHA…EARS). Coiled coils occupy residues 914 to 1237 (SVER…APEV) and 1338 to 1445 (VYEG…ELEV). Thr1032 bears the Phosphothreonine mark. Phosphoserine is present on residues Ser1452 and Ser1652. The region spanning 1534–1810 (TSTINSIKKV…IRTIQMRLRD (277 aa)) is the Dilute domain. Thr1760 bears the Phosphothreonine mark.

It belongs to the TRAFAC class myosin-kinesin ATPase superfamily. Myosin family. May be a homodimer, which associates with multiple calmodulin or myosin light chains. Interacts with RIPL2, the interaction is required for its role in dendrite formation. Interacts with MLPH. Interacts with SYTL4. Interacts with MYRIP. Interacts with RAB10; mediates the transport to the plasma membrane of SLC2A4/GLUT4 storage vesicles. Interacts with FMR1; this interaction occurs in association with polyribosome. Detected in melanocytes.

It catalyses the reaction ATP + H2O = ADP + phosphate + H(+). Its function is as follows. Processive actin-based motor that can move in large steps approximating the 36-nm pseudo-repeat of the actin filament. Can hydrolyze ATP in the presence of actin, which is essential for its function as a motor protein. Involved in melanosome transport. Also mediates the transport of vesicles to the plasma membrane. May also be required for some polarization process involved in dendrite formation. This Homo sapiens (Human) protein is Unconventional myosin-Va (MYO5A).